Here is a 257-residue protein sequence, read N- to C-terminus: uncharacterized protein (257 aa).

7 to 14 lines the ATP pocket; sequence GKGGVGKT.

It to M.jannaschii MJ0084 and MJ0685.

This is an uncharacterized protein from Methanocaldococcus jannaschii (strain ATCC 43067 / DSM 2661 / JAL-1 / JCM 10045 / NBRC 100440) (Methanococcus jannaschii).